Reading from the N-terminus, the 141-residue chain is Histone H2B (141 aa).

Residues methionine 1 to proline 10 show a composition bias toward basic and acidic residues. Positions methionine 1 to lysine 49 are disordered. Lysine 8 and lysine 9 each carry N6-acetyllysine; alternate. Residues lysine 8 and lysine 9 each participate in a glycyl lysine isopeptide (Lys-Gly) (interchain with G-Cter in SUMO); alternate cross-link. Residues serine 11 to alanine 22 are compositionally biased toward low complexity. An N6-acetyllysine modification is found at lysine 15. Lysine 26 is modified (N6-acetyllysine; alternate). Lysine 26 participates in a covalent cross-link: Glycyl lysine isopeptide (Lys-Gly) (interchain with G-Cter in SUMO); alternate. Lysine 27 participates in a covalent cross-link: Glycyl lysine isopeptide (Lys-Gly) (interchain with G-Cter in SUMO). Lysine 135 is covalently cross-linked (Glycyl lysine isopeptide (Lys-Gly) (interchain with G-Cter in ubiquitin)).

It belongs to the histone H2B family. The nucleosome is a histone octamer containing two molecules each of H2A, H2B, H3 and H4 assembled in one H3-H4 heterotetramer and two H2A-H2B heterodimers. The octamer wraps approximately 147 bp of DNA. Post-translationally, monoubiquitinated by the ubc2-bre1 complex to form H2BK123ub1. H2BK123ub1 gives a specific tag for epigenetic transcriptional activation and is also prerequisite for H3K4me and H3K79me formation. H2BK123ub1 also modulates the formation of double-strand breaks during meiosis and is a prerequisite for DNA-damage checkpoint activation. In terms of processing, acetylated by gcn5 to form H2BK11ac and H2BK16ac. H2BK16ac can also be formed by esa1. Acetylation of N-terminal lysines and particularly formation of H2BK11acK16ac has a positive effect on transcription. Sumoylation to form H2BK6su or H2BK7su, and probably also H2BK16su or H2BK17su, occurs preferentially near the telomeres and represses gene transcription.

Its subcellular location is the nucleus. It is found in the chromosome. Its function is as follows. Core component of nucleosome. Nucleosomes wrap and compact DNA into chromatin, limiting DNA accessibility to the cellular machineries which require DNA as a template. Histones thereby play a central role in transcription regulation, DNA repair, DNA replication and chromosomal stability. DNA accessibility is regulated via a complex set of post-translational modifications of histones, also called histone code, and nucleosome remodeling. The chain is Histone H2B (htb1) from Aspergillus niger (strain ATCC MYA-4892 / CBS 513.88 / FGSC A1513).